A 186-amino-acid chain; its full sequence is Sec-independent protein translocase protein TatB (186 aa).

Residues 1-21 (MFDIGFSELILLMVLGLVVLG) form a helical membrane-spanning segment. The tract at residues 162–186 (LSSYYPPDDIEIAPASKSQSSKTKS) is disordered. The segment covering 177 to 186 (SKSQSSKTKS) has biased composition (polar residues).

It belongs to the TatB family. The Tat system comprises two distinct complexes: a TatABC complex, containing multiple copies of TatA, TatB and TatC subunits, and a separate TatA complex, containing only TatA subunits. Substrates initially bind to the TatABC complex, which probably triggers association of the separate TatA complex to form the active translocon.

The protein resides in the cell inner membrane. In terms of biological role, part of the twin-arginine translocation (Tat) system that transports large folded proteins containing a characteristic twin-arginine motif in their signal peptide across membranes. Together with TatC, TatB is part of a receptor directly interacting with Tat signal peptides. TatB may form an oligomeric binding site that transiently accommodates folded Tat precursor proteins before their translocation. This Haemophilus influenzae (strain 86-028NP) protein is Sec-independent protein translocase protein TatB.